We begin with the raw amino-acid sequence, 615 residues long: Probable methylmalonyl-CoA mutase small subunit (615 aa).

Belongs to the methylmalonyl-CoA mutase family. In terms of assembly, heterodimer of an alpha and a beta chain. Requires adenosylcob(III)alamin as cofactor.

The enzyme catalyses (R)-methylmalonyl-CoA = succinyl-CoA. It functions in the pathway metabolic intermediate metabolism; propanoyl-CoA degradation; succinyl-CoA from propanoyl-CoA: step 3/3. Catalyzes the isomerization of succinyl-CoA to methylmalonyl-CoA during synthesis of propionate from tricarboxylic acid-cycle intermediates. This chain is Probable methylmalonyl-CoA mutase small subunit (mutA), found in Mycobacterium bovis (strain ATCC BAA-935 / AF2122/97).